We begin with the raw amino-acid sequence, 21 residues long: Cupiennin-6d (21 aa).

Ser21 carries the serine amide modification.

As to expression, expressed by the venom gland.

It is found in the secreted. The chain is Cupiennin-6d from Cupiennius salei (American wandering spider).